The primary structure comprises 302 residues: Possible hemolysin C (302 aa).

CBS domains are found at residues 79-141 (MVPR…NFRL) and 144-201 (LIRK…IDDE).

This sequence belongs to the UPF0053 family. Hemolysin C subfamily.

The protein is Possible hemolysin C (tlyC) of Rickettsia bellii (strain OSU 85-389).